A 285-amino-acid polypeptide reads, in one-letter code: Probable endonuclease 4 (285 aa).

The Zn(2+) site is built by His-69, His-109, Glu-145, Asp-179, His-182, His-216, Asp-229, His-231, and Glu-261.

It belongs to the AP endonuclease 2 family. Zn(2+) serves as cofactor.

It carries out the reaction Endonucleolytic cleavage to 5'-phosphooligonucleotide end-products.. Endonuclease IV plays a role in DNA repair. It cleaves phosphodiester bonds at apurinic or apyrimidinic (AP) sites, generating a 3'-hydroxyl group and a 5'-terminal sugar phosphate. This chain is Probable endonuclease 4, found in Salmonella dublin (strain CT_02021853).